Reading from the N-terminus, the 737-residue chain is tRNA-dihydrouridine(47) synthase [NAD(P)(+)] (737 aa).

Basic and acidic residues-rich tracts occupy residues 1-11 (MESQETAKRPI) and 24-33 (PATKRVKLDD). The tract at residues 1–127 (MESQETAKRP…GKKKRPKGQN (127 aa)) is disordered. The span at 35-44 (PVPQIQEEPS) shows a compositional bias: low complexity. A compositionally biased stretch (basic and acidic residues) spans 57 to 82 (EDEKPTEQRQDDRDKRRGIAPIKKEY). 2 C3H1-type zinc fingers span residues 142 to 166 (CNSVAWTPEFSPRHCKHGERCNALH) and 187 to 208 (CPVWETHGKCSSGWRCLFVESH). FMN is bound by residues 332–334 (PLT) and glutamine 407. Catalysis depends on cysteine 439, which acts as the Proton donor. FMN contacts are provided by residues lysine 479, histidine 520, 577–579 (NGD), and 601–602 (GR).

This sequence belongs to the Dus family. Dus3 subfamily. It depends on FMN as a cofactor.

The protein resides in the cytoplasm. It localises to the nucleus. The catalysed reaction is 5,6-dihydrouridine(47) in tRNA + NAD(+) = uridine(47) in tRNA + NADH + H(+). The enzyme catalyses 5,6-dihydrouridine(47) in tRNA + NADP(+) = uridine(47) in tRNA + NADPH + H(+). It carries out the reaction a 5,6-dihydrouridine in mRNA + NAD(+) = a uridine in mRNA + NADH + H(+). It catalyses the reaction a 5,6-dihydrouridine in mRNA + NADP(+) = a uridine in mRNA + NADPH + H(+). In terms of biological role, catalyzes the synthesis of dihydrouridine, a modified base found in the D-loop of most tRNAs. Specifically modifies U47 in cytoplasmic tRNAs. Catalyzes the synthesis of dihydrouridine in some mRNAs, thereby affecting their translation. The sequence is that of tRNA-dihydrouridine(47) synthase [NAD(P)(+)] (dus-3) from Neurospora crassa (strain ATCC 24698 / 74-OR23-1A / CBS 708.71 / DSM 1257 / FGSC 987).